The following is a 370-amino-acid chain: 3-dehydroquinate synthase (370 aa).

NAD(+) contacts are provided by residues 112–116 (GVVGD), 136–137 (TS), lysine 149, lysine 158, and 176–179 (TLRT). Positions 191, 254, and 276 each coordinate Zn(2+).

Belongs to the sugar phosphate cyclases superfamily. Dehydroquinate synthase family. Co(2+) serves as cofactor. The cofactor is Zn(2+). Requires NAD(+) as cofactor.

Its subcellular location is the cytoplasm. It carries out the reaction 7-phospho-2-dehydro-3-deoxy-D-arabino-heptonate = 3-dehydroquinate + phosphate. It participates in metabolic intermediate biosynthesis; chorismate biosynthesis; chorismate from D-erythrose 4-phosphate and phosphoenolpyruvate: step 2/7. Catalyzes the conversion of 3-deoxy-D-arabino-heptulosonate 7-phosphate (DAHP) to dehydroquinate (DHQ). The chain is 3-dehydroquinate synthase from Xanthomonas oryzae pv. oryzae (strain PXO99A).